The following is a 450-amino-acid chain: Bestrophin homolog 1 (450 aa).

The Cytoplasmic portion of the chain corresponds to 1-31 (MTINYHKEIMTSHPWTFFLLLFKWKGSIWKA). The helical transmembrane segment at 32–51 (VYMETIIFLICYGIISVIYK) threads the bilayer. The Extracellular portion of the chain corresponds to 52–60 (TAMGESSQR). A helical transmembrane segment spans residues 61–82 (TFESLVRYFDKRLSYIPLEFVL). Over 83 to 242 (GFFVTTVVNR…DWVPLPLMYP (160 aa)) the chain is Cytoplasmic. Residues 243–260 (QLVCLAVNLYFLVSIIAR) form a helical membrane-spanning segment. Over 261–278 (QLVIEKHKMVDEVDVYFP) the chain is Extracellular. The helical transmembrane segment at 279 to 292 (VMTFLQFIFYMGWL) threads the bilayer. Over 293–450 (KVIDVMLNPF…WKIPTNPQKF (158 aa)) the chain is Cytoplasmic. The Ca(2+) site is built by Asn-300, Asp-305, and Asp-308.

This sequence belongs to the anion channel-forming bestrophin (TC 1.A.46) family. Calcium-sensitive chloride channel subfamily. Forms oligomers.

It is found in the cell membrane. It carries out the reaction chloride(in) = chloride(out). Its function is as follows. Ligand-gated anion channel that allows the movement of chloride monoatomic anions across cell membranes when activated by Calcium (Ca2+). The polypeptide is Bestrophin homolog 1 (best-1) (Caenorhabditis elegans).